Here is a 314-residue protein sequence, read N- to C-terminus: Coiled-coil domain-containing protein 92 (314 aa).

Coiled-coil stretches lie at residues 1 to 27 and 59 to 113; these read MAATNLENQLHSAQKNLLFLQREHAST and DSSS…EKKY. Disordered regions lie at residues 153 to 193 and 251 to 314; these read LSSS…KKSL and ASDR…DRTV. A compositionally biased stretch (basic and acidic residues) spans 176-186; that stretch reads PPKDKLPETPR. S192 carries the post-translational modification Phosphoserine. The span at 266–280 shows a compositional bias: basic residues; sequence KPHKTHVGVAHRIHH.

As to quaternary structure, interacts with CEP164. In terms of processing, phosphorylated at Ser-192 by TTBK2.

Its subcellular location is the cytoplasm. The protein resides in the cytoskeleton. It localises to the microtubule organizing center. It is found in the centrosome. The protein localises to the centriole. Interferon-stimulated protein that plays a role in innate immunity. The chain is Coiled-coil domain-containing protein 92 (Ccdc92) from Mus musculus (Mouse).